We begin with the raw amino-acid sequence, 980 residues long: NACHT, LRR and PYD domains-containing protein 7 (980 aa).

A Pyrin domain is found at 1 to 93; sequence MTSPQLEWTL…CKMAKAEMME (93 aa). The interval 104-123 is disordered; it reads ELGDAEEDSELAKPGEKEGW. Over residues 113–123 the composition is skewed to basic and acidic residues; sequence ELAKPGEKEGW. The region spanning 172–491 is the NACHT domain; it reads YTVVLHGPAG…LEKEEGEDRD (320 aa). 178 to 185 is a binding site for ATP; the sequence is GPAGVGKT. LRR repeat units follow at residues 614–638, 674–697, 760–784, 788–810, 817–840, 845–868, 874–897, 902–928, and 933–957; these read CQDL…DFEL, NSNL…ILCD, KCNL…FFYV, NQSL…MLLY, KHFL…DLAA, SKKL…FLCE, DCKL…YLSE, ACSL…ALEN, and LKHL…VKEK.

This sequence belongs to the NLRP family. In terms of assembly, directly interacts with CASP1 and IL1B. As to expression, expressed in numerous tissues including uterus and ovary, with low levels in heart and brain. Not detected in skeletal muscle.

Inhibits CASP1/caspase-1-dependent IL1B secretion. The chain is NACHT, LRR and PYD domains-containing protein 7 (NLRP7) from Homo sapiens (Human).